Reading from the N-terminus, the 239-residue chain is Calcium load-activated calcium channel (239 aa).

Residues 1-55 (MPRKRKCDLRAVRVGLLLGGGGVYGSRFRFTFPGCRALSPWRVRVQRRRCEMSTM) are Lumenal-facing. The helical transmembrane segment at 56–83 (FADTLLIVFISVCTALLAEGITWVLVYR) threads the bilayer. Positions 83–140 (RTDKYKRLKAEVEKQSKKLEKKKETITESAGRQQKKKIERQEEKLKNNNRDLSMVRMK) form a coiled coil. Residues 84–137 (TDKYKRLKAEVEKQSKKLEKKKETITESAGRQQKKKIERQEEKLKNNNRDLSMV) lie on the Cytoplasmic side of the membrane. At Ser111 the chain carries Phosphoserine. Residues 138-157 (RMKSMFAIGFCFTALMGMFN) traverse the membrane as a helical segment. The Lumenal segment spans residues 158–171 (SIFDGRVVAKLPFT). An intramembrane segment occupies 172 to 181 (PLSYIQGLSH). Residues 182–191 (RNLLGDDTTD) are Lumenal-facing. The chain crosses the membrane as a helical span at residues 192-213 (CSFIFLYILCTMSIRQNIQKIL). At 214-239 (GLAPSRAATKQAGGFLGPPPPSGKFS) the chain is on the cytoplasmic side. Ser239 is modified (phosphoserine).

It belongs to the TMCO1 family. In terms of assembly, homodimer and homotetramer. Homodimer under resting conditions; forms homotetramers following ER calcium overload. Component of the GET- and EMC-like (GEL) complex, composed of RAB5IF/OPTI and TMCO1. The GEL complex is part of the multi-pass translocon (MPT) complex, composed of three subcomplexes, the GEL complex (composed of RAB5IF/OPTI and TMCO1), the BOS complex (composed of NCLN/Nicalin, NOMO and TMEM147) and the PAT complex (composed of WDR83OS/Asterix and CCDC47). The MPT complex associates with the SEC61 complex. Widely expressed in adult and fetal tissues, with higher levels in thymus, prostate, testis and small intestine and lower levels in brain, placenta, lung and kidney. Present in most tissues in the eye, including the trabecular meshwork and retina (at protein level).

The protein localises to the endoplasmic reticulum membrane. It localises to the golgi apparatus membrane. It is found in the mitochondrion membrane. It carries out the reaction Ca(2+)(in) = Ca(2+)(out). Endoplasmic reticulum (ER) calcium-selective channel preventing intracellular Ca2(+) stores from overfilling and maintaining calcium homeostasis in the ER. In response to endoplasmic reticulum (ER) Ca2(+) overloading, assembles into a homotetramer, forming a functional calcium-selective channel facilitating Ca2(+) release. Mediates ER Ca2(+) homeostasis in osteoblasts and plays a key role in bone formation, via the CaMKII-HDAC4-RUNX2 signaling axis. Component of the multi-pass translocon (MPT) complex that mediates insertion of multi-pass membrane proteins into the lipid bilayer of membranes. The MPT complex takes over after the SEC61 complex: following membrane insertion of the first few transmembrane segments of proteins by the SEC61 complex, the MPT complex occludes the lateral gate of the SEC61 complex to promote insertion of subsequent transmembrane regions. Within the MPT complex, the GEL subcomplex may mediate insertion of transmembrane regions into the membrane. The polypeptide is Calcium load-activated calcium channel (Homo sapiens (Human)).